We begin with the raw amino-acid sequence, 344 residues long: Dihydroorotase (344 aa).

Zn(2+)-binding residues include H14 and H16. Residues 16–18 and N42 contribute to the substrate site; that span reads HLR. The Zn(2+) site is built by K100, H137, and H175. K100 carries the N6-carboxylysine modification. H137 contacts substrate. Residue L220 participates in substrate binding. D248 provides a ligand contact to Zn(2+). D248 is a catalytic residue. 2 residues coordinate substrate: H252 and A264.

This sequence belongs to the metallo-dependent hydrolases superfamily. DHOase family. Class II DHOase subfamily. Homodimer. The cofactor is Zn(2+).

The catalysed reaction is (S)-dihydroorotate + H2O = N-carbamoyl-L-aspartate + H(+). It functions in the pathway pyrimidine metabolism; UMP biosynthesis via de novo pathway; (S)-dihydroorotate from bicarbonate: step 3/3. Functionally, catalyzes the reversible cyclization of carbamoyl aspartate to dihydroorotate. The protein is Dihydroorotase of Cupriavidus necator (strain ATCC 17699 / DSM 428 / KCTC 22496 / NCIMB 10442 / H16 / Stanier 337) (Ralstonia eutropha).